The sequence spans 122 residues: Large ribosomal subunit protein uL18 (122 aa).

This sequence belongs to the universal ribosomal protein uL18 family. In terms of assembly, part of the 50S ribosomal subunit; part of the 5S rRNA/L5/L18/L25 subcomplex. Contacts the 5S and 23S rRNAs.

This is one of the proteins that bind and probably mediate the attachment of the 5S RNA into the large ribosomal subunit, where it forms part of the central protuberance. This chain is Large ribosomal subunit protein uL18, found in Desulfatibacillum aliphaticivorans.